Here is a 388-residue protein sequence, read N- to C-terminus: GTPase Obg (388 aa).

Positions 1 to 159 constitute an Obg domain; the sequence is MKFVDEAVIR…RSLKLELLLL (159 aa). The OBG-type G domain occupies 160–333; it reads ADVGLLGMPN…LATKLLDFIQ (174 aa). Residues 166–173, 191–195, 213–216, 283–286, and 314–316 contribute to the GTP site; these read GMPNAGKS, FTTLV, DIPG, NKAD, and SAY. Positions 173 and 193 each coordinate Mg(2+).

The protein belongs to the TRAFAC class OBG-HflX-like GTPase superfamily. OBG GTPase family. In terms of assembly, monomer. Mg(2+) is required as a cofactor.

It is found in the cytoplasm. An essential GTPase which binds GTP, GDP and possibly (p)ppGpp with moderate affinity, with high nucleotide exchange rates and a fairly low GTP hydrolysis rate. Plays a role in control of the cell cycle, stress response, ribosome biogenesis and in those bacteria that undergo differentiation, in morphogenesis control. The polypeptide is GTPase Obg (Shewanella sp. (strain MR-4)).